A 188-amino-acid chain; its full sequence is Elongation factor P (188 aa).

Belongs to the elongation factor P family.

It is found in the cytoplasm. Its pathway is protein biosynthesis; polypeptide chain elongation. In terms of biological role, involved in peptide bond synthesis. Stimulates efficient translation and peptide-bond synthesis on native or reconstituted 70S ribosomes in vitro. Probably functions indirectly by altering the affinity of the ribosome for aminoacyl-tRNA, thus increasing their reactivity as acceptors for peptidyl transferase. The chain is Elongation factor P from Bacteroides fragilis (strain ATCC 25285 / DSM 2151 / CCUG 4856 / JCM 11019 / LMG 10263 / NCTC 9343 / Onslow / VPI 2553 / EN-2).